The following is a 293-amino-acid chain: PHD finger protein 11A (293 aa).

Residues Lys25–Leu61 form a C2HC pre-PHD-type zinc finger. The PHD-type; degenerate zinc-finger motif lies at Leu91–Ala143. A disordered region spans residues Ser262 to Leu293.

Its subcellular location is the nucleus. The protein is PHD finger protein 11A (Phf11a) of Mus musculus (Mouse).